A 403-amino-acid chain; its full sequence is Nucleoporin nup44 (403 aa).

Polar residues-rich tracts occupy residues M1–P31 and F67–N124. A disordered region spans residues M1–N124.

It localises to the cytoplasm. The protein resides in the nucleus. Its function is as follows. Functions as a component of the nuclear pore complex (NPC). NPC components, collectively referred to as nucleoporins (NUPs), can play the role of both NPC structural components and of docking or interaction partners for transiently associated nuclear transport factors. Active directional transport is assured by both, a Phe-Gly (FG) repeat affinity gradient for these transport factors across the NPC and a transport cofactor concentration gradient across the nuclear envelope. The protein is Nucleoporin nup44 (nup44) of Schizosaccharomyces pombe (strain 972 / ATCC 24843) (Fission yeast).